The sequence spans 243 residues: UPF0758 protein sll0766 (243 aa).

One can recognise an MPN domain in the interval 113–235; that stretch reads VVDSPEAAAI…HQSLRQCTDL (123 aa). Residues histidine 184, histidine 186, and aspartate 197 each coordinate Zn(2+). A JAMM motif motif is present at residues 184 to 197; it reads HNHPSGGLEPSPED.

Belongs to the UPF0758 family.

The sequence is that of UPF0758 protein sll0766 from Synechocystis sp. (strain ATCC 27184 / PCC 6803 / Kazusa).